A 469-amino-acid chain; its full sequence is Calcium-binding mitochondrial carrier protein SCaMC-2-A (469 aa).

Topologically, residues 1-189 (MLCLCLYVPV…EHLTGMWWRH (189 aa)) are mitochondrial intermembrane. EF-hand domains lie at 47–80 (TYRRWRKKSLKTEEKEHDGQLDFEEFVHYLQDHE), 78–113 (DHEKDLKLVFKSMDRKIAGQVNANDIVNSLRDLGVH), and 114–149 (ISLKQAEKVLKSMDKNGTMTIDWNEWKKYPTLQPAE). Ca(2+) is bound by residues D64, Q66, and E71. Solcar repeat units lie at residues 184–270 (GMWW…IKRV), 278–363 (LGIS…LKNT), and 375–463 (PGVF…IKST). The chain crosses the membrane as a helical span at residues 190-207 (LVSGGGAGAVSRTCTAPL). Residues 208-244 (DRLKVLMQVHGCQGKSMCLMSGLTQMIKEGGVRSLWR) are Mitochondrial matrix-facing. A helical transmembrane segment spans residues 245-264 (GNGINVIKIAPETALKFMAY). Residues 265–287 (EQIKRVMGSSQETLGISERFVAG) are Mitochondrial intermembrane-facing. The helical transmembrane segment at 288–301 (SLAGVIAQSTIYPM) threads the bilayer. At 302–337 (EVLKTRLALRKTGQYKGISDCAKHILKTEGMSAFYK) the chain is on the mitochondrial matrix side. A helical transmembrane segment spans residues 338–357 (GYVPNMLGIIPYAGIDLAVY). Residues 358 to 380 (ETLKNTWLQRYGTENADPGVFVL) are Mitochondrial intermembrane-facing. Residues 381-398 (LACGTVSSTCGQLASYPL) traverse the membrane as a helical segment. The Mitochondrial matrix portion of the chain corresponds to 399 to 437 (ALIRTRMQAQASVEGSSQVSMTGLFKQIMKTEGPTGLYR). A helical membrane pass occupies residues 438-457 (GLTPNFLKVIPAVSISYVVY). The Mitochondrial intermembrane portion of the chain corresponds to 458 to 469 (EHIKSTLGVRSR).

Belongs to the mitochondrial carrier (TC 2.A.29) family.

The protein resides in the mitochondrion inner membrane. Its function is as follows. Calcium-dependent mitochondrial solute carrier. This chain is Calcium-binding mitochondrial carrier protein SCaMC-2-A (slc25a25a), found in Danio rerio (Zebrafish).